Consider the following 131-residue polypeptide: Sperm microtubule inner protein 11 (131 aa).

The disordered stretch occupies residues 18-44 (KKRNTTEETNQKEPEPTRLPPIISKDG). The span at 21–33 (NTTEETNQKEPEP) shows a compositional bias: basic and acidic residues.

Microtubule inner protein component of sperm flagellar doublet microtubules.

The protein localises to the cytoplasm. The protein resides in the cytoskeleton. Its subcellular location is the flagellum axoneme. Microtubule inner protein (MIP) part of the dynein-decorated doublet microtubules (DMTs) in flagellum axoneme. May serve to reinforce and thus stabilize the microtubule structure in the sperm flagella. This chain is Sperm microtubule inner protein 11, found in Homo sapiens (Human).